The following is a 99-amino-acid chain: Transmembrane protein 14A (99 aa).

3 helical membrane-spanning segments follow: residues 1 to 21 (MDLI…LGYK), 24 to 44 (GGVP…YGAY), and 79 to 99 (PAGL…LLLL).

It belongs to the TMEM14 family.

It is found in the mitochondrion membrane. It localises to the endoplasmic reticulum membrane. In terms of biological role, inhibits apoptosis via negative regulation of the mitochondrial outer membrane permeabilization involved in apoptotic signaling pathway. The sequence is that of Transmembrane protein 14A (Tmem14a) from Mus musculus (Mouse).